We begin with the raw amino-acid sequence, 330 residues long: ADP-L-glycero-D-manno-heptose-6-epimerase (330 aa).

Residues 10–11, 31–32, lysine 38, lysine 53, 74–78, and asparagine 91 each bind NADP(+); these read FI, DD, and QGACS. Tyrosine 138 functions as the Proton acceptor in the catalytic mechanism. Residue lysine 142 coordinates NADP(+). Asparagine 167 lines the substrate pocket. The NADP(+) site is built by valine 168 and lysine 176. The Proton acceptor role is filled by lysine 176. Substrate contacts are provided by residues arginine 178, histidine 185, 199–202, arginine 212, and tyrosine 291; that span reads FAGW.

This sequence belongs to the NAD(P)-dependent epimerase/dehydratase family. HldD subfamily. As to quaternary structure, homopentamer. NADP(+) serves as cofactor.

It catalyses the reaction ADP-D-glycero-beta-D-manno-heptose = ADP-L-glycero-beta-D-manno-heptose. The protein operates within nucleotide-sugar biosynthesis; ADP-L-glycero-beta-D-manno-heptose biosynthesis; ADP-L-glycero-beta-D-manno-heptose from D-glycero-beta-D-manno-heptose 7-phosphate: step 4/4. Catalyzes the interconversion between ADP-D-glycero-beta-D-manno-heptose and ADP-L-glycero-beta-D-manno-heptose via an epimerization at carbon 6 of the heptose. The polypeptide is ADP-L-glycero-D-manno-heptose-6-epimerase (Bordetella petrii (strain ATCC BAA-461 / DSM 12804 / CCUG 43448)).